Consider the following 256-residue polypeptide: Thiazole synthase (256 aa).

Lys-95 serves as the catalytic Schiff-base intermediate with DXP. 1-deoxy-D-xylulose 5-phosphate is bound by residues Gly-156, Ala-182 to Gly-183, and Asn-204 to Thr-205.

The protein belongs to the ThiG family. As to quaternary structure, homotetramer. Forms heterodimers with either ThiH or ThiS.

The protein localises to the cytoplasm. The enzyme catalyses [ThiS sulfur-carrier protein]-C-terminal-Gly-aminoethanethioate + 2-iminoacetate + 1-deoxy-D-xylulose 5-phosphate = [ThiS sulfur-carrier protein]-C-terminal Gly-Gly + 2-[(2R,5Z)-2-carboxy-4-methylthiazol-5(2H)-ylidene]ethyl phosphate + 2 H2O + H(+). Its pathway is cofactor biosynthesis; thiamine diphosphate biosynthesis. Functionally, catalyzes the rearrangement of 1-deoxy-D-xylulose 5-phosphate (DXP) to produce the thiazole phosphate moiety of thiamine. Sulfur is provided by the thiocarboxylate moiety of the carrier protein ThiS. In vitro, sulfur can be provided by H(2)S. The polypeptide is Thiazole synthase (Shigella flexneri).